Consider the following 243-residue polypeptide: Methylthioribulose-1-phosphate dehydratase (243 aa).

A substrate-binding site is contributed by Cys90. Residues His108 and His110 each coordinate Zn(2+). Glu131 acts as the Proton donor/acceptor in catalysis. His193 contacts Zn(2+).

Belongs to the aldolase class II family. MtnB subfamily. Requires Zn(2+) as cofactor.

The protein localises to the cytoplasm. The enzyme catalyses 5-(methylsulfanyl)-D-ribulose 1-phosphate = 5-methylsulfanyl-2,3-dioxopentyl phosphate + H2O. It participates in amino-acid biosynthesis; L-methionine biosynthesis via salvage pathway; L-methionine from S-methyl-5-thio-alpha-D-ribose 1-phosphate: step 2/6. Its function is as follows. Catalyzes the dehydration of methylthioribulose-1-phosphate (MTRu-1-P) into 2,3-diketo-5-methylthiopentyl-1-phosphate (DK-MTP-1-P). The chain is Methylthioribulose-1-phosphate dehydratase from Zygosaccharomyces rouxii (strain ATCC 2623 / CBS 732 / NBRC 1130 / NCYC 568 / NRRL Y-229).